An 89-amino-acid chain; its full sequence is Small ribosomal subunit protein uS15 (89 aa).

This sequence belongs to the universal ribosomal protein uS15 family. As to quaternary structure, part of the 30S ribosomal subunit. Forms a bridge to the 50S subunit in the 70S ribosome, contacting the 23S rRNA.

Its function is as follows. One of the primary rRNA binding proteins, it binds directly to 16S rRNA where it helps nucleate assembly of the platform of the 30S subunit by binding and bridging several RNA helices of the 16S rRNA. Forms an intersubunit bridge (bridge B4) with the 23S rRNA of the 50S subunit in the ribosome. The sequence is that of Small ribosomal subunit protein uS15 from Halalkalibacterium halodurans (strain ATCC BAA-125 / DSM 18197 / FERM 7344 / JCM 9153 / C-125) (Bacillus halodurans).